The primary structure comprises 193 residues: Peptidyl-tRNA hydrolase (193 aa).

Residue Tyr21 participates in tRNA binding. His26 functions as the Proton acceptor in the catalytic mechanism. 3 residues coordinate tRNA: Tyr72, Asn74, and Asn120.

Belongs to the PTH family. In terms of assembly, monomer.

Its subcellular location is the cytoplasm. The catalysed reaction is an N-acyl-L-alpha-aminoacyl-tRNA + H2O = an N-acyl-L-amino acid + a tRNA + H(+). Hydrolyzes ribosome-free peptidyl-tRNAs (with 1 or more amino acids incorporated), which drop off the ribosome during protein synthesis, or as a result of ribosome stalling. Functionally, catalyzes the release of premature peptidyl moieties from peptidyl-tRNA molecules trapped in stalled 50S ribosomal subunits, and thus maintains levels of free tRNAs and 50S ribosomes. In Nocardia farcinica (strain IFM 10152), this protein is Peptidyl-tRNA hydrolase.